We begin with the raw amino-acid sequence, 348 residues long: Phenylalanine--tRNA ligase alpha subunit (348 aa).

Glu-259 is a Mg(2+) binding site.

Belongs to the class-II aminoacyl-tRNA synthetase family. Phe-tRNA synthetase alpha subunit type 1 subfamily. Tetramer of two alpha and two beta subunits. It depends on Mg(2+) as a cofactor.

Its subcellular location is the cytoplasm. The enzyme catalyses tRNA(Phe) + L-phenylalanine + ATP = L-phenylalanyl-tRNA(Phe) + AMP + diphosphate + H(+). The sequence is that of Phenylalanine--tRNA ligase alpha subunit from Enterococcus faecalis (strain ATCC 700802 / V583).